The chain runs to 326 residues: Acetyl-coenzyme A carboxylase carboxyl transferase subunit beta (326 aa).

The CoA carboxyltransferase N-terminal domain maps to 25-308 (LWVKCPASGE…RRDDRSTLQL (284 aa)). The interval 298–326 (RRRDDRSTLQLTPPKTHAPKPPEPKVKPD) is disordered. A compositionally biased stretch (basic and acidic residues) spans 317–326 (KPPEPKVKPD).

Belongs to the AccD/PCCB family. As to quaternary structure, acetyl-CoA carboxylase is a heterohexamer composed of biotin carboxyl carrier protein (AccB), biotin carboxylase (AccC) and two subunits each of ACCase subunit alpha (AccA) and ACCase subunit beta (AccD).

It localises to the cytoplasm. It carries out the reaction N(6)-carboxybiotinyl-L-lysyl-[protein] + acetyl-CoA = N(6)-biotinyl-L-lysyl-[protein] + malonyl-CoA. Its pathway is lipid metabolism; malonyl-CoA biosynthesis; malonyl-CoA from acetyl-CoA: step 1/1. In terms of biological role, component of the acetyl coenzyme A carboxylase (ACC) complex. Biotin carboxylase (BC) catalyzes the carboxylation of biotin on its carrier protein (BCCP) and then the CO(2) group is transferred by the transcarboxylase to acetyl-CoA to form malonyl-CoA. This Hyphomonas neptunium (strain ATCC 15444) protein is Acetyl-coenzyme A carboxylase carboxyl transferase subunit beta.